The sequence spans 630 residues: Scarecrow-like protein 34 (630 aa).

The GRAS domain maps to 240–628 (KKKKSQVVDF…RTLYASSCWV (389 aa)). A leucine repeat I (LRI) region spans residues 247 to 312 (VDFRTLLTHC…GSTGPMIQTY (66 aa)). The tract at residues 331–396 (YRVYLSSSPF…DVPRKLRITG (66 aa)) is VHIID. The short motif at 362-366 (LHIVD) is the VHIID element. The segment at 412 to 444 (ETGRRLAEYCKRFNVPFEYKAIASQNWETIRIE) is leucine repeat II (LRII). The segment at 454-549 (LAVNAGLRLK…REFYGREAMN (96 aa)) is PFYRE. The segment at 552–628 (ACEEADRVER…RTLYASSCWV (77 aa)) is SAW.

It belongs to the GRAS family.

It localises to the nucleus. Its function is as follows. Probable transcription factor involved in plant development. The polypeptide is Scarecrow-like protein 34 (SCL34) (Arabidopsis thaliana (Mouse-ear cress)).